A 267-amino-acid chain; its full sequence is Corrinoid adenosyltransferase EutT (267 aa).

A divalent metal cation contacts are provided by Cys-80 and Cys-83.

The protein belongs to the Cob(I)alamin adenosyltransferase family. EutT subfamily. Homodimer. A divalent metal cation serves as cofactor.

The protein resides in the bacterial microcompartment. It carries out the reaction 2 cob(II)alamin + reduced [electron-transfer flavoprotein] + 2 ATP + 2 H2O = 2 adenosylcob(III)alamin + oxidized [electron-transfer flavoprotein] + 2 phosphate + 2 diphosphate + 3 H(+). The enzyme catalyses 2 cob(II)inamide + reduced [electron-transfer flavoprotein] + 2 ATP + 2 H2O = 2 adenosylcob(III)inamide + oxidized [electron-transfer flavoprotein] + 2 phosphate + 2 diphosphate + 3 H(+). Its pathway is amine and polyamine degradation; ethanolamine degradation. Functionally, converts cyanocobalamin (CN-B12) to adenosylcobalamin (AdoCbl), the inducer of the eut operon. Is not active on cobinamide nor other intermediates in the adenosylcobalamin synthetic pathway. Allows full induction of the eut operon. Can use ADP, CTP and dATP in place of ATP, and cobinamide in place of cobalamin, none are as efficiently used as ATP and cobalamin. Its function is as follows. Expression of the eut operon allows this bacteria to use ethanolamine (EA) as a carbon, nitrogen and energy source. It relies on cobalamin (vitamin B12) both as a cofactor for the ethanolamine ammonia-lyase (EAL) activity and to induce the operon. EA enhances bacterial survival in macrophages in a concentration-dependent manner, suggesting it is an important nutrient during infection. In Salmonella typhimurium (strain LT2 / SGSC1412 / ATCC 700720), this protein is Corrinoid adenosyltransferase EutT.